A 96-amino-acid polypeptide reads, in one-letter code: uncharacterized protein (96 aa).

A helical membrane pass occupies residues 1–21 (MSDFEIIVGISSLLQVIILNI).

It is found in the membrane. This is an uncharacterized protein from Saccharomyces cerevisiae (strain ATCC 204508 / S288c) (Baker's yeast).